A 474-amino-acid chain; its full sequence is MPTTETKTGAGFKAGVKDYRLTYYTPDYQVKETDILAAFRMTPQPGVPPEECGAAVAAESSTGTWTTVWTDGLTSLDRYKGRCYDLEPVPGEENQYIAYIAYPIDLFEEGSVTNLFTSIVGNVFGFKALRALRLEDLRIPPAYVKTFQGPPHGIQAERDRLNKYGRGLLGCTIKPKLGLSAKNYGRAVYECLRGGLDFTKDDENVNSQPFMRWRDRFLFVSEAIYKAQAETGEIKGHYLNATAPDCEEMYKRAECAKDFGVPIIMHDYLTGGFTANTSLATYCRDNGLLLHIHRAMHAVIDRQRNHGIHFRVLAKALRLSGGDHLHSGTVVGKLEGEREVTLGFVDLMRDDYIEKDRSRGIYFTQDWCSLPGTMPVASGGIHVWHMPALVEIFGDDACLQFGGGTLGHPWGNAPGAAANRVALEACTQARNEGRDLAREGGDVIRQACQWSPELAAACEVWKEIKFEFETIDTL.

Pro2 carries the N-acetylproline modification. N6,N6,N6-trimethyllysine is present on Lys13. Asn122 and Thr172 together coordinate substrate. Lys174 acts as the Proton acceptor in catalysis. Lys176 is a binding site for substrate. Mg(2+)-binding residues include Lys200, Asp202, and Glu203. Lys200 carries the N6-carboxylysine modification. The active-site Proton acceptor is the His293. Residues Arg294, His326, and Ser378 each coordinate substrate.

It belongs to the RuBisCO large chain family. Type I subfamily. Heterohexadecamer of 8 large chains and 8 small chains; disulfide-linked. The disulfide link is formed within the large subunit homodimers. The cofactor is Mg(2+). Post-translationally, the disulfide bond which can form in the large chain dimeric partners within the hexadecamer appears to be associated with oxidative stress and protein turnover.

The protein localises to the plastid. It is found in the chloroplast. It catalyses the reaction 2 (2R)-3-phosphoglycerate + 2 H(+) = D-ribulose 1,5-bisphosphate + CO2 + H2O. The catalysed reaction is D-ribulose 1,5-bisphosphate + O2 = 2-phosphoglycolate + (2R)-3-phosphoglycerate + 2 H(+). RuBisCO catalyzes two reactions: the carboxylation of D-ribulose 1,5-bisphosphate, the primary event in carbon dioxide fixation, as well as the oxidative fragmentation of the pentose substrate in the photorespiration process. Both reactions occur simultaneously and in competition at the same active site. This chain is Ribulose bisphosphate carboxylase large chain, found in Oltmannsiellopsis viridis (Marine flagellate).